Consider the following 315-residue polypeptide: Methionyl-tRNA formyltransferase (315 aa).

(6S)-5,6,7,8-tetrahydrofolate is bound at residue 113-116 (SLLP).

It belongs to the Fmt family.

The catalysed reaction is L-methionyl-tRNA(fMet) + (6R)-10-formyltetrahydrofolate = N-formyl-L-methionyl-tRNA(fMet) + (6S)-5,6,7,8-tetrahydrofolate + H(+). Attaches a formyl group to the free amino group of methionyl-tRNA(fMet). The formyl group appears to play a dual role in the initiator identity of N-formylmethionyl-tRNA by promoting its recognition by IF2 and preventing the misappropriation of this tRNA by the elongation apparatus. In Escherichia coli O17:K52:H18 (strain UMN026 / ExPEC), this protein is Methionyl-tRNA formyltransferase.